The sequence spans 99 residues: Small ribosomal subunit protein bS20 (99 aa).

Belongs to the bacterial ribosomal protein bS20 family.

Functionally, binds directly to 16S ribosomal RNA. The protein is Small ribosomal subunit protein bS20 of Synechococcus sp. (strain CC9311).